Reading from the N-terminus, the 495-residue chain is Amidophosphoribosyltransferase (495 aa).

The interval 1–22 is disordered; it reads MFPPSSDLTELNDGQPLSGHHA. A propeptide spanning residues 1–28 is cleaved from the precursor; that stretch reads MFPPSSDLTELNDGQPLSGHHADKPEEA. The active-site Nucleophile is cysteine 29. The region spanning 29–254 is the Glutamine amidotransferase type-2 domain; the sequence is CGVFGIYAPE…AGELVHITES (226 aa). Cysteine 270 serves as a coordination point for [4Fe-4S] cluster. Mg(2+)-binding residues include serine 317, aspartate 379, and aspartate 380. 3 residues coordinate [4Fe-4S] cluster: cysteine 416, cysteine 467, and cysteine 470.

It in the C-terminal section; belongs to the purine/pyrimidine phosphoribosyltransferase family. It depends on Mg(2+) as a cofactor. The cofactor is [4Fe-4S] cluster.

The catalysed reaction is 5-phospho-beta-D-ribosylamine + L-glutamate + diphosphate = 5-phospho-alpha-D-ribose 1-diphosphate + L-glutamine + H2O. Its pathway is purine metabolism; IMP biosynthesis via de novo pathway; N(1)-(5-phospho-D-ribosyl)glycinamide from 5-phospho-alpha-D-ribose 1-diphosphate: step 1/2. Functionally, catalyzes the formation of phosphoribosylamine from phosphoribosylpyrophosphate (PRPP) and glutamine. The polypeptide is Amidophosphoribosyltransferase (Synechocystis sp. (strain ATCC 27184 / PCC 6803 / Kazusa)).